Here is a 765-residue protein sequence, read N- to C-terminus: Dipeptidyl peptidase 4 (765 aa).

At 1-6 (MKTPWK) the chain is on the cytoplasmic side. A helical; Signal-anchor for type II membrane protein membrane pass occupies residues 7-29 (VLLGLLAIAALVTVITVPVVLLT). Residues 30–765 (KGNDASTDSR…HFLKQCFSLL (736 aa)) are Extracellular-facing. Asn84, Asn91, Asn149, Asn218, Asn228, Asn271, Asn280, Asn320, and Asn392 each carry an N-linked (GlcNAc...) asparagine glycan. Cystine bridges form between Cys384–Cys393, Cys443–Cys446, and Cys453–Cys471. Asn495 carries an N-linked (GlcNAc...) asparagine glycan. The active-site Charge relay system is the Ser629. Cysteines 648 and 761 form a disulfide. Residue Asn684 is glycosylated (N-linked (GlcNAc...) asparagine). Residues Asp707 and His739 each act as charge relay system in the active site.

Belongs to the peptidase S9B family. DPPIV subfamily. Monomer. Homodimer. Heterodimer with Seprase (FAP). Requires homodimerization for optimal dipeptidyl peptidase activity and T-cell costimulation. Found in a membrane raft complex, at least composed of BCL10, CARD11, DPP4 and IKBKB. Associates with collagen. Interacts with PTPRC; the interaction is enhanced in an interleukin-12-dependent manner in activated lymphocytes. Interacts (via extracellular domain) with ADA; does not inhibit its dipeptidyl peptidase activity. Interacts with CAV1 (via the N-terminus); the interaction is direct. Interacts (via cytoplasmic tail) with CARD11 (via PDZ domain); its homodimerization is necessary for interaction with CARD11. Interacts with IGF2R; the interaction is direct. Interacts with GPC3. The soluble form (Dipeptidyl peptidase 4 soluble form also named SDPP) derives from the membrane form (Dipeptidyl peptidase 4 membrane form also named MDPP) by proteolytic processing. Post-translationally, N- and O-Glycosylated. In terms of processing, phosphorylated. Mannose 6-phosphate residues in the carbohydrate moiety are necessary for interaction with IGF2R in activated T-cells. Mannose 6-phosphorylation is induced during T-cell activation. In terms of tissue distribution, intestinal epithelium, dendritic cells and several immune system tissues.

It is found in the secreted. It localises to the cell membrane. Its subcellular location is the apical cell membrane. The protein resides in the cell projection. The protein localises to the invadopodium membrane. It is found in the lamellipodium membrane. It localises to the cell junction. Its subcellular location is the membrane raft. The catalysed reaction is Release of an N-terminal dipeptide, Xaa-Yaa-|-Zaa-, from a polypeptide, preferentially when Yaa is Pro, provided Zaa is neither Pro nor hydroxyproline.. With respect to regulation, inhibited by GPC3 and diprotin A. Its function is as follows. Cell surface glycoprotein receptor involved in the costimulatory signal essential for T-cell receptor (TCR)-mediated T-cell activation. Acts as a positive regulator of T-cell coactivation, by binding at least ADA, CAV1, IGF2R, and PTPRC. Its binding to CAV1 and CARD11 induces T-cell proliferation and NF-kappa-B activation in a T-cell receptor/CD3-dependent manner. Its interaction with ADA also regulates lymphocyte-epithelial cell adhesion. In association with FAP is involved in the pericellular proteolysis of the extracellular matrix (ECM), the migration and invasion of endothelial cells into the ECM. May be involved in the promotion of lymphatic endothelial cells adhesion, migration and tube formation. When overexpressed, enhanced cell proliferation, a process inhibited by GPC3. Also acts as a serine exopeptidase with a dipeptidyl peptidase activity that regulates various physiological processes by cleaving peptides in the circulation, including many chemokines, mitogenic growth factors, neuropeptides and peptide hormones. Removes N-terminal dipeptides sequentially from polypeptides having unsubstituted N-termini provided that the penultimate residue is proline. The protein is Dipeptidyl peptidase 4 (DPP4) of Bos taurus (Bovine).